Reading from the N-terminus, the 1614-residue chain is Protein scribble homolog (1614 aa).

Residues 1–809 (MLKCIPLWRC…MRLWRERMVE (809 aa)) form a sufficient for targeting to adherens junction and to inhibit cell proliferation region. LRR repeat units follow at residues 11-34 (NRHVESVDKRHCSLQAVPEEIYRY), 35-58 (SRSLEELLLDANQLRELPKPFFRL), 59-81 (LNLRKLGLSDNEIQRLPPEVANF), 83-105 (QLVELDVSRNDIPEIPESIKFCK), 107-127 (LEIADFSGNPLSRLPEGFTQL), 128-150 (RSLAHLALNDVSLQALPGDVGNL), 151-173 (ANLVTLELRENLLKSLPSSLSFL), 174-196 (VKLEQLDLGGNELEVLPDTLGAL), 197-219 (PNLRELWLDRNQLSALPPELGNL), 221-242 (RLVCLDVSENRLEELPAELGGL), 243-265 (LLLTDLLLSQNLLQRLPDGIGQL), 267-288 (QLSILKVDQNRLCEVTEAIGDC), 289-311 (ENLSELILTENLLTALPRSLGKL), 312-334 (TKLTNLNADRNRLEVLPPEIGGC), 336-357 (ALSVLSLRDNRLATLPAELAHT), 359-380 (ELHVLDVAGNRLQSLPFALTHL), and 382-405 (LKALWLAENQAQPMLRFQTEDDAQ). Phosphoserine is present on S37. Phosphothreonine is present on T378. 3 disordered regions span residues 417–441 (PQQPPPSLEESGLQSSPSESWSDAP), 462–608 (GAAA…RLIR), and 636–692 (AQPD…VVSA). Residues 428 to 437 (GLQSSPSESW) show a composition bias toward polar residues. Phosphothreonine is present on T475. A compositionally biased stretch (basic and acidic residues) spans 479-494 (SELKVMKRGVEERRGE). The span at 516-533 (TESGLSEDSQPSTGTASQ) shows a compositional bias: polar residues. The segment covering 548-557 (QQEAAPNAQE) has biased composition (low complexity). Residues 662 to 686 (EEEDEEDEEEDEEEEEVAVAEEDKE) are compositionally biased toward acidic residues. The stretch at 664–691 (EDEEDEEEDEEEEEVAVAEEDKEEAVVS) forms a coiled coil. S699 and S755 each carry phosphoserine. Residues 708 to 1219 (IEPARIEEEE…SLESVSSIDR (512 aa)) form an interaction with ARHGEF7 region. The region spanning 719–806 (TLTIVRQTGG…TVQMRLWRER (88 aa)) is the PDZ 1 domain. The tract at residues 719–1184 (TLTIVRQTGG…TVLVCDGFDT (466 aa)) is required for interaction with VIM. At T817 the chain carries Phosphothreonine. Residues S826, S866, and S930 each carry the phosphoserine modification. One can recognise a PDZ 2 domain in the interval 853-941 (VACLVRSEKG…TIALLLEREA (89 aa)). The segment at 940–971 (EAGGPLPPSPLPHSPPPPVTAPSTVVTASPGE) is disordered. A compositionally biased stretch (pro residues) spans 944-959 (PLPPSPLPHSPPPPVT). Positions 960 to 969 (APSTVVTASP) are enriched in low complexity. 2 consecutive PDZ domains span residues 994–1083 (EICL…RRDP) and 1090–1178 (ELCI…TVLV). S1130, S1210, S1213, S1216, S1222, S1260, S1268, and S1271 each carry phosphoserine. Positions 1214 to 1448 (VSSIDRELSP…LPDRALSPAE (235 aa)) are disordered. The span at 1217–1232 (IDRELSPEGCGKEKEP) shows a compositional bias: basic and acidic residues. T1304 carries the post-translational modification Phosphothreonine. S1310 is subject to Phosphoserine. Basic and acidic residues predominate over residues 1315–1327 (SFRERQKYFELEV). S1340 is subject to Phosphoserine. Positions 1341 to 1368 (LVGADDLRKMQEEEARKLQQKRAQLMRE) form a coiled coil. Positions 1345–1357 (DDLRKMQEEEARK) are enriched in basic and acidic residues. Acidic residues predominate over residues 1378–1390 (LDGEAPDDEEPEE). Over residues 1396 to 1408 (GPAAGLSPSSPQP) the composition is skewed to low complexity. Phosphoserine occurs at positions 1402 and 1405. Over residues 1418–1429 (AKAERRHQERLR) the composition is skewed to basic and acidic residues. Residues S1432, S1445, and S1467 each carry the phosphoserine modification. The tract at residues 1476 to 1524 (QMVLSKSQEGRSRRGPLERLAEAPSPAPTPSPTPVEDLGLQTSTSPGRL) is disordered. A compositionally biased stretch (basic and acidic residues) spans 1483–1496 (QEGRSRRGPLERLA). S1500 carries the phosphoserine modification. A Phosphothreonine modification is found at T1504. Phosphoserine is present on residues S1506, S1520, and S1550. The interval 1581-1614 (GRPSPGTVGPEEVTLCSSRRPVRPGRRGLGPVPS) is disordered.

Belongs to the LAP (LRR and PDZ) protein family. In terms of assembly, interacts with UBE3A. Interacts with PAK1 and PAK2. Interacts (via PDZ domains) with VANGL2. Interacts (via PDZ domains) with LPP and TRIP6; the interaction is direct. Interacts (via PDZ domains) with TJP2. Interacts (via PDZ domains) with APC; may mediate APC targeting to adherens junctions of epithelial cells. Interacts (via PDZ domains) with TSHR; regulates TSHR trafficking and function. Interacts with ARHGEF7 and GIT1; interacts directly with ARHGEF7. Interacts with CTNNB1. Interacts with MAPK12. Interacts (via PDZ domains 1 and 3) with MCC. Interacts with DLG5. Interacts with STK4/MST1 and LATS1 in the presence of DLG5. Interacts (via PDZ domain 3) with CRTAM (via PDZ-binding motif); the interaction promotes CRTAM and SCRIB polarization in a subset of CD4+ T-cells. Interacts with YES1, when YES1 is in a closed conformation; the interaction facilitates YES1 autophosphorylation. Interacts (via PDZ domains) with VIM; the interaction protects SCRIB from proteasomal degradation and facilitates SCRIB localization to intermediate filaments, the interaction is reduced by cell contact inhibition. Post-translationally, ubiquitinated; targeted for UBE3A-dependent multiubiquitination and degraded. Palmitoylated. Could be depalmitoylated by LYPLA1 and/or LYPLA2. Palmitoylation of SCRIB by ZDHHC7 is required for its localization to cell-cell junctions, function in the establishement of epithelial cell polarity and the regulation of downstream signaling pathways important for epithelial cell differentiation.

It localises to the cell membrane. It is found in the cell junction. Its subcellular location is the adherens junction. The protein resides in the cell projection. The protein localises to the lamellipodium. It localises to the cytoplasm. It is found in the postsynapse. Its subcellular location is the presynapse. Functionally, scaffold protein involved in different aspects of polarized cell differentiation regulating epithelial and neuronal morphogenesis and T-cell polarization. Via its interaction with CRTAM, required for the late phase polarization of a subset of CD4+ T-cells, which in turn regulates TCR-mediated proliferation and IFNG and IL22 production. Plays a role in cell directional movement, cell orientation, cell sheet organization and Golgi complex polarization at the cell migration front. Promotes epithelial cell layer barrier function via maintaining cell-cell adhesion. Most probably functions in the establishment of apico-basal cell polarity. May function in cell proliferation regulating progression from G1 to S phase and as a positive regulator of apoptosis for instance during acinar morphogenesis of the mammary epithelium. May regulate cell invasion via MAPK-mediated cell migration and adhesion. May play a role in exocytosis and in the targeting of synaptic vesicles to synapses. Functions as an activator of Rac GTPase activity. The protein is Protein scribble homolog of Canis lupus familiaris (Dog).